We begin with the raw amino-acid sequence, 330 residues long: Aspartate--ammonia ligase (330 aa).

The protein belongs to the class-II aminoacyl-tRNA synthetase family. AsnA subfamily.

The protein resides in the cytoplasm. The enzyme catalyses L-aspartate + NH4(+) + ATP = L-asparagine + AMP + diphosphate + H(+). It functions in the pathway amino-acid biosynthesis; L-asparagine biosynthesis; L-asparagine from L-aspartate (ammonia route): step 1/1. This chain is Aspartate--ammonia ligase, found in Edwardsiella ictaluri (strain 93-146).